A 948-amino-acid polypeptide reads, in one-letter code: Coiled-coil domain-containing protein 66 (948 aa).

2 positions are modified to phosphothreonine: Thr-115 and Thr-121. Ser-369 carries the post-translational modification Phosphoserine. The interval 458 to 499 (DRRRQKQLEHQKAITAQVEEKRRKKQLEEEQRKKEEQEEELR) is disordered. A coiled-coil region spans residues 467 to 558 (HQKAITAQVE…EQRIRELAQK (92 aa)). The mediates localization to cilia, centrosomes and spindle microtubules and the interaction with PCM1, CEP290, CEP104 and CSPP1 stretch occupies residues 570 to 948 (GVDTIQMEYN…NQEESFGSSF (379 aa)). Ser-606 carries the phosphoserine modification. Disordered stretches follow at residues 690-713 (QTKH…KRYI) and 788-808 (SFSK…RTQQ).

In terms of assembly, homodimer; disulfide-linked. Interacts with CEP290. Interacts with PCM1. Interacts with ARMC9, TOGARAM1, CSPP1 and CEP104. Interacts with CDK5RAP2, CEP152, CEP192, TBG1 and PRC1. As to expression, widely expressed (at protein level). Expressed in retina, mainly in photoreceptors but also in outer plexiform and ganglion cell layers (at protein level).

It is found in the cytoplasm. It localises to the cytoskeleton. Its subcellular location is the microtubule organizing center. The protein resides in the centrosome. The protein localises to the centriolar satellite. It is found in the cell projection. It localises to the cilium. Its subcellular location is the cilium basal body. The protein resides in the cilium axoneme. The protein localises to the photoreceptor inner segment. It is found in the photoreceptor outer segment. It localises to the spindle. Its subcellular location is the midbody. Microtubule-binding protein required for ciliogenesis. May function in ciliogenesis by mediating the transport of proteins like BBS4 to the cilium, but also through the organization of the centriolar satellites. Required for the assembly of signaling-competent cilia with proper structure and length. Mediates this function in part by regulating transition zone assembly and basal body recruitment of the IFT-B complex. Cooperates with the ciliopathy proteins CSPP1 and CEP104 during cilium length regulation. Plays two important roles during cell division. First, is required for mitotic progression via regulation of spindle assembly, organization and orientation, levels of spindle microtubules (MTs), kinetochore-fiber integrity, and chromosome alignment. Second, functions during cytokinesis in part by regulating assembly and organization of central spindle and midbody MTs. Plays a role in retina morphogenesis and/or homeostasis. In Homo sapiens (Human), this protein is Coiled-coil domain-containing protein 66.